Here is a 571-residue protein sequence, read N- to C-terminus: Urease subunit alpha (571 aa).

In terms of domain architecture, Urease spans 133–571 (GGIDTHVHFI…LPLTQRYFLF (439 aa)). Ni(2+) contacts are provided by His138, His140, and Lys221. Lys221 carries the post-translational modification N6-carboxylysine. His223 contributes to the substrate binding site. 2 residues coordinate Ni(2+): His250 and His276. His324 (proton donor) is an active-site residue. Asp364 contributes to the Ni(2+) binding site.

This sequence belongs to the metallo-dependent hydrolases superfamily. Urease alpha subunit family. As to quaternary structure, heterotrimer of UreA (gamma), UreB (beta) and UreC (alpha) subunits. Three heterotrimers associate to form the active enzyme. Requires Ni cation as cofactor. Post-translationally, carboxylation allows a single lysine to coordinate two nickel ions.

The protein resides in the cytoplasm. It catalyses the reaction urea + 2 H2O + H(+) = hydrogencarbonate + 2 NH4(+). It participates in nitrogen metabolism; urea degradation; CO(2) and NH(3) from urea (urease route): step 1/1. The chain is Urease subunit alpha from Staphylococcus aureus (strain USA300).